A 439-amino-acid polypeptide reads, in one-letter code: MKGIGNRESGIVDGQRNGASVGSVTTALPIPDSPLPIPGARKRAPRIALIAGEASGDILGAGLIEQLRLRYPNAEFVGIGGDAMRGVGCQTWFDASELAVMGLTEVLRHLPRLLKLRSAFRERVLAWKPDVFIGIDAPDFNLPVERWLKQRGIKTVHYVSPSVWAWREKRAEKIGVSADLVLCLFPMEPPIYAKHGVDARFVGHPMADDIAYQSDRAAARATLGLSASSTVLAVLPGSRHGEISRLGDTFFQAAWLVSEHLPNLHVLVPAANPGCKQLLAEQLSRSSLPVMRSHLLDGQARTAMLAADVVLLASGTATLEAMLVKRPMVVGYKVAPLTYRIVKLLGLLKVNRYALPNILANDDLAPELMQDDCTPERLCVALLDWFKHPDKVAALQPRYLALHAELRRDASARAADAVAGLLSQRESGMENRESAGAGA.

Belongs to the LpxB family.

The catalysed reaction is a lipid X + a UDP-2-N,3-O-bis[(3R)-3-hydroxyacyl]-alpha-D-glucosamine = a lipid A disaccharide + UDP + H(+). It functions in the pathway bacterial outer membrane biogenesis; LPS lipid A biosynthesis. Functionally, condensation of UDP-2,3-diacylglucosamine and 2,3-diacylglucosamine-1-phosphate to form lipid A disaccharide, a precursor of lipid A, a phosphorylated glycolipid that anchors the lipopolysaccharide to the outer membrane of the cell. The chain is Lipid-A-disaccharide synthase from Xanthomonas axonopodis pv. citri (strain 306).